The following is a 336-amino-acid chain: Glucokinase (336 aa).

12 to 17 contributes to the ATP binding site; that stretch reads ADIGGT.

It belongs to the bacterial glucokinase family.

The protein localises to the cytoplasm. It carries out the reaction D-glucose + ATP = D-glucose 6-phosphate + ADP + H(+). In Helicobacter acinonychis (strain Sheeba), this protein is Glucokinase.